The chain runs to 222 residues: Large ribosomal subunit protein uL1 (222 aa).

It belongs to the universal ribosomal protein uL1 family. In terms of assembly, part of the 50S ribosomal subunit.

Binds directly to 23S rRNA. Probably involved in E site tRNA release. Its function is as follows. Protein L1 is also a translational repressor protein, it controls the translation of its operon by binding to its mRNA. This is Large ribosomal subunit protein uL1 from Pyrobaculum islandicum (strain DSM 4184 / JCM 9189 / GEO3).